The primary structure comprises 8903 residues: Nonribosomal peptide synthetase vlms (8903 aa).

One can recognise a Carrier 1 domain in the interval 11–84; it reads GSCRTTLGKV…ELADSIDEQN (74 aa). The tract at residues 13 to 81 is thiolation (T) domain 1; sequence CRTTLGKVAA…TLAELADSID (69 aa). S45 is subject to O-(pantetheine 4'-phosphoryl)serine. Adenylation (A) domain stretches follow at residues 59 to 736 and 989 to 1386; these read GIWV…SHLP and MAAQ…IKIR. A condensation (C) domain 1 region spans residues 572–953; sequence VPHQLDTEKL…FLLDGVNMSI (382 aa). A Carrier 2 domain is found at 1524–1600; the sequence is SSMSTVEQEL…QLALAAESQA (77 aa). Residues 1529–1597 are thiolation (T) domain 2; sequence VEQELRQIWS…TIPQLALAAE (69 aa). S1561 is subject to O-(pantetheine 4'-phosphoryl)serine. The epimerase (E) domain 1 stretch occupies residues 1613-2050; it reads FPLSPIQKMY…TVKELAAVSA (438 aa). The segment at 2091-2523 is condensation (C) domain 2; the sequence is DILPCSPIQQ…LLSVSEENKL (433 aa). The tract at residues 2546–2943 is adenylation (A) domain 2; that stretch reads MSSHADATAI…GRQDSQVKIR (398 aa). A Carrier 3 domain is found at 3084 to 3160; the sequence is LFTTAIERQL…ELALQAKMVD (77 aa). The tract at residues 3089–3157 is thiolation (T) domain 3; that stretch reads IERQLRQVWS…TIPELALQAK (69 aa). S3121 carries the O-(pantetheine 4'-phosphoryl)serine modification. Positions 3174 to 3614 are epimerase (E) domain 2; the sequence is FALSPIQQMY…AIKSLVEELM (441 aa). The segment at 3655–4093 is condensation (C) domain 3; the sequence is EDILPCSPMQ…LMSTKDIQQL (439 aa). Positions 4114-4512 are adenylation (A) domain 3; it reads ERLNTQPESM…GRIDTQIKIR (399 aa). The region spanning 4649–4725 is the Carrier 4 domain; sequence APRTTMEKKL…DLAEATELKC (77 aa). A thiolation (T) domain 4 region spans residues 4654–4722; that stretch reads MEKKLRDLFA…ILADLAEATE (69 aa). O-(pantetheine 4'-phosphoryl)serine is present on S4686. The condensation (C) domain 4 stretch occupies residues 4775–5191; that stretch reads EDVYPCSPLQ…AQLQMLSEED (417 aa). Residues 5216–5614 form an adenylation (A) domain 4 region; it reads ETMTSQPDAP…GRRDTQVKIR (399 aa). Residues 5753-5829 form the Carrier 5 domain; it reads APTTAMEKRL…DLAQELEQRH (77 aa). Residues 5758 to 5826 form a thiolation (T) domain 5 region; that stretch reads MEKRLQNLFC…RLGDLAQELE (69 aa). Residue S5790 is modified to O-(pantetheine 4'-phosphoryl)serine. Residue E5875 is a region of interest, condensation (C) domain 5. An adenylation (A) domain 5 region spans residues 6311–6702; that stretch reads EEQMSLRPSE…GRMDGQIKIR (392 aa). A Carrier 6 domain is found at 6836-6912; that stretch reads SSATNTERQL…ELAATLEVMD (77 aa). Positions 6841–6909 are thiolation (T) domain 6; it reads TERQLRQIWS…TIPELAATLE (69 aa). S6873 is subject to O-(pantetheine 4'-phosphoryl)serine. The interval 6923-7349 is epimerase (E) domain 3; that stretch reads GFFELSPIQR…YGRTIKTLVE (427 aa). The tract at residues 7391–7823 is condensation (C) domain 6; sequence EDILPCSPIQ…LVLTNDEAQI (433 aa). Residues 7844–8240 are adenylation (A) domain 6; it reads EQMARKPEAQ…LDRIGTQVKI (397 aa). The region spanning 8368-8444 is the Carrier 7 domain; the sequence is APISATEAVF…AMAACVSDVS (77 aa). Residues 8369–8441 form a thiolation (T) domain 7 region; it reads PISATEAVFC…VLHAMAACVS (73 aa). O-(pantetheine 4'-phosphoryl)serine is present on S8405. The tract at residues 8482-8897 is condensation (C) domain 7; sequence DVLPTTEFQT…MENPRSTVGH (416 aa).

Belongs to the NRP synthetase family.

The protein operates within secondary metabolite biosynthesis. Its function is as follows. Nonribosomal peptide synthetase; part of the gene cluster that mediates the biosynthesis of verlamelin, a lipopeptide that exhibits antifungal activity against plant pathogenic fungi. Verlamelin is a cyclic hexadepsipeptide and is bridged by ester bonding between a 5-hydroxytetradecanoic acid moiety and a carboxyl group on the terminal Val of amide-bonded tetradecanoyl-hexapeptide D-allo-Thr-D-Ala-L-Pro-L-Gln-D-Tyr-L-Val. VlmA and vlmB are altogether regarded as essential components in the biosynthesis of 5-hydroxytetradecanoic acid. VlmA catalyzes the hydroxylation at position C5 of tetradecanoic acid produced in primary metabolism, while the precise function of vlmB still remains to be solved. To be loaded onto the waiting NRPS, 5-hydroxytetradecanoic acid is activated in the form of acyladenylate by the AMP-dependent ligase vlmC. VlmS seems to accept the fatty-acyl intermediate onto the initial module to further elongate amino acid residues by the downstream modules. In addition, in the last module at its C-terminus, vlmS contains a surplus condensation (C) domain that may be involved in cyclization, the last step to form verlamelin. This Lecanicillium sp protein is Nonribosomal peptide synthetase vlms.